The following is a 67-amino-acid chain: Medusin-PT (67 aa).

The first 22 residues, 1 to 22 (MAFLKKSLFLVFFLGFVSLSIC), serve as a signal peptide directing secretion. A propeptide spanning residues 23 to 48 (EEEKRETDEKENEQEDDREERSEEKR) is cleaved from the precursor. A disordered region spans residues 25 to 46 (EKRETDEKENEQEDDREERSEE). Over residues 31–40 (EKENEQEDDR) the composition is skewed to acidic residues. Leucine amide is present on Leu66.

Belongs to the frog skin active peptide (FSAP) family. Medusin subfamily. Post-translationally, in the synthetic mutant medusin-PT1a [T58K], the Leu-50 has been modified in a D-amino acid. In medusin-PT1a, there is an increase in antimicrobial activity, and an increase in hemolytic activity. It is more potent against S.aureus and gains activity against MRSA, E.faecalis, E.coli, P.aeruginosa and C.albicans. There is an important increase in both biofilm inhibition and biofilm eradication. Expressed by the skin glands.

The protein resides in the secreted. The protein localises to the target cell membrane. Antimicrobial peptide with activity against Gram-positive bacteria S.epidermidis ATCC 12228 (MIC=50 uM) and S.aureus (MIC=64 ug/ml and MBC=128 ug/ml). Not active against some Gram-positive bacteria (methicillin-resistant S.aureus (MRSA), E.faecalis), Gram-negative bacterium E.coli ATCC 25922 and fungus C.albicans at concentrations up to 100 uM. Can only slightly inhibit the formation of biofilm by S.aureus (minimal biofilm inhibitionconcentration MBIC=512 ug/ml, minimal biofilm eradication concentration MBEC&gt;512 ug/ml). Has an anti-inflammatory effect, since it inhibits the production of the pro-inflammatory cytokines TNF-alpha and IL-1beta. Has high activity of stimulation of insulin release, which may protect the species from being eaten by predators by causing fatal hypoglycemia. Is not cytotoxic to cancer line cells. Shows very low hemolysis on horse erythrocytes and moderate hemolysis on mouse erythrocytes. The sequence is that of Medusin-PT from Phyllomedusa tarsius (Brownbelly leaf frog).